We begin with the raw amino-acid sequence, 353 residues long: G-protein complex alpha subunit gpaA (353 aa).

Positions 1-25 are disordered; sequence MGCGMSTEDKEGKARNEEIENQLKR. Positions 7 to 25 are enriched in basic and acidic residues; that stretch reads TEDKEGKARNEEIENQLKR. In terms of domain architecture, G-alpha spans 32–353; that stretch reads NEIKMLLLGA…QENLRLCGLI (322 aa). The segment at 35-48 is G1 motif; that stretch reads KMLLLGAGESGKST. A divalent metal cation contacts are provided by Ser47 and Thr181. The G2 motif stretch occupies residues 173 to 181; that stretch reads DVLRSRVKT. A G3 motif region spans residues 196–205; sequence YRMFDVGGQR. Positions 265–272 are G4 motif; sequence ILFLNKID. A G5 motif region spans residues 323–328; sequence TCATDT.

This sequence belongs to the G-alpha family. G(q) subfamily. As to quaternary structure, g proteins are composed of 3 units; alpha, beta and gamma. The alpha chain contains the guanine nucleotide binding site. Interacts with gprM.

Functionally, G-protein complex alpha subunit that plays a role in conidiation and regulation of the biosynthesis of secondary metabolites such as dihydroxynaphthalene (DHN)-melanin, via interaction with the G protein-coupled receptor gprM. The chain is G-protein complex alpha subunit gpaA from Aspergillus fumigatus (strain CBS 144.89 / FGSC A1163 / CEA10) (Neosartorya fumigata).